A 310-amino-acid chain; its full sequence is tRNA dimethylallyltransferase (310 aa).

14–21 (GPTASGKS) lines the ATP pocket. Residue 16 to 21 (TASGKS) coordinates substrate. Interaction with substrate tRNA regions lie at residues 39 to 42 (DSMQ) and 163 to 167 (QRIVR).

Belongs to the IPP transferase family. In terms of assembly, monomer. Mg(2+) serves as cofactor.

The catalysed reaction is adenosine(37) in tRNA + dimethylallyl diphosphate = N(6)-dimethylallyladenosine(37) in tRNA + diphosphate. In terms of biological role, catalyzes the transfer of a dimethylallyl group onto the adenine at position 37 in tRNAs that read codons beginning with uridine, leading to the formation of N6-(dimethylallyl)adenosine (i(6)A). In Brucella melitensis biotype 2 (strain ATCC 23457), this protein is tRNA dimethylallyltransferase.